The following is a 137-amino-acid chain: Mandibular organ-inhibiting hormone (137 aa).

Residues 1–26 (MTTKCTVMAVVLAACICLQVLPQAYG) form the signal peptide. A Pyrrolidone carboxylic acid modification is found at glutamine 63. 3 disulfide bridges follow: cysteine 69/cysteine 105, cysteine 85/cysteine 101, and cysteine 88/cysteine 114. Valine amide is present on valine 134.

This sequence belongs to the arthropod CHH/MIH/GIH/VIH hormone family. Produced by the medulla terminalis X-organ in the eyestalks and transported to the sinus gland where it is stored and released.

The protein resides in the secreted. Its function is as follows. Represses the synthesis of methyl farnesoate, the precursor of insect juvenile hormone III in the mandibular organ. Also has hyperglycemic activity. This chain is Mandibular organ-inhibiting hormone, found in Libinia emarginata (Portly spider crab).